The following is a 446-amino-acid chain: Probable arogenate/prephenate dehydrogenase (446 aa).

The region spanning 6–288 (LTISIIGGTD…SEAKRGAYYS (283 aa)) is the Prephenate/arogenate dehydrogenase domain.

This sequence in the N-terminal section; belongs to the prephenate/arogenate dehydrogenase family.

The protein is Probable arogenate/prephenate dehydrogenase of Methanocaldococcus jannaschii (strain ATCC 43067 / DSM 2661 / JAL-1 / JCM 10045 / NBRC 100440) (Methanococcus jannaschii).